The following is a 443-amino-acid chain: Amino-acid acetyltransferase (443 aa).

Residues 296–443 (EQIRRATIND…RSKVLMADLG (148 aa)) enclose the N-acetyltransferase domain.

Belongs to the acetyltransferase family. ArgA subfamily. In terms of assembly, homohexamer.

Its subcellular location is the cytoplasm. It carries out the reaction L-glutamate + acetyl-CoA = N-acetyl-L-glutamate + CoA + H(+). It functions in the pathway amino-acid biosynthesis; L-arginine biosynthesis; N(2)-acetyl-L-ornithine from L-glutamate: step 1/4. In Salmonella typhi, this protein is Amino-acid acetyltransferase (argA).